A 601-amino-acid polypeptide reads, in one-letter code: Glutathione-regulated potassium-efflux system protein KefB (601 aa).

13 helical membrane-spanning segments follow: residues 4–24, 29–49, 55–75, 87–107, 115–135, 152–172, 177–197, 207–227, 230–250, 268–288, 291–311, 324–344, and 356–376; these read SDFL…VPLA, IGAV…GLGF, EILH…GLEL, IFGV…GLLM, AAVV…LQLM, VLLF…LLAG, HFDW…LIGG, FIAA…LVLG, LFMD…GVLL, GLLL…GVLY, LLWV…VLYL, MQFA…FSTA, and ALLL…MKLV. The RCK N-terminal domain occupies 400–519; that stretch reads KPQVIVVGFG…AGVTQFSRET (120 aa).

Belongs to the monovalent cation:proton antiporter 2 (CPA2) transporter (TC 2.A.37) family. KefB subfamily. In terms of assembly, interacts with the regulatory subunit KefG.

The protein resides in the cell inner membrane. In terms of biological role, pore-forming subunit of a potassium efflux system that confers protection against electrophiles. Catalyzes K(+)/H(+) antiport. This Escherichia coli O81 (strain ED1a) protein is Glutathione-regulated potassium-efflux system protein KefB.